A 445-amino-acid polypeptide reads, in one-letter code: Probable glycine dehydrogenase (decarboxylating) subunit 1 (445 aa).

The protein belongs to the GcvP family. N-terminal subunit subfamily. In terms of assembly, the glycine cleavage system is composed of four proteins: P, T, L and H. In this organism, the P 'protein' is a heterodimer of two subunits.

It catalyses the reaction N(6)-[(R)-lipoyl]-L-lysyl-[glycine-cleavage complex H protein] + glycine + H(+) = N(6)-[(R)-S(8)-aminomethyldihydrolipoyl]-L-lysyl-[glycine-cleavage complex H protein] + CO2. Functionally, the glycine cleavage system catalyzes the degradation of glycine. The P protein binds the alpha-amino group of glycine through its pyridoxal phosphate cofactor; CO(2) is released and the remaining methylamine moiety is then transferred to the lipoamide cofactor of the H protein. The protein is Probable glycine dehydrogenase (decarboxylating) subunit 1 of Anaeromyxobacter dehalogenans (strain 2CP-C).